The sequence spans 327 residues: Phenylalanine--tRNA ligase alpha subunit (327 aa).

E252 lines the Mg(2+) pocket.

It belongs to the class-II aminoacyl-tRNA synthetase family. Phe-tRNA synthetase alpha subunit type 1 subfamily. In terms of assembly, tetramer of two alpha and two beta subunits. It depends on Mg(2+) as a cofactor.

The protein resides in the cytoplasm. It catalyses the reaction tRNA(Phe) + L-phenylalanine + ATP = L-phenylalanyl-tRNA(Phe) + AMP + diphosphate + H(+). This Shewanella putrefaciens (strain CN-32 / ATCC BAA-453) protein is Phenylalanine--tRNA ligase alpha subunit.